Here is a 317-residue protein sequence, read N- to C-terminus: Nicotianamine synthase (317 aa).

The protein belongs to the nicotianamine synthase (NAS)-like family. In terms of assembly, homomultimer. In terms of tissue distribution, leaves and roots.

It carries out the reaction 3 S-adenosyl-L-methionine = nicotianamine + 3 S-methyl-5'-thioadenosine + 3 H(+). Functionally, synthesizes nicotianamine, a polyamine that serves as a sensor for the physiological iron status within the plant, and/or might be involved in the transport of iron. This chain is Nicotianamine synthase (CHLN), found in Solanum lycopersicum (Tomato).